Here is a 237-residue protein sequence, read N- to C-terminus: MGNSVMEKIKGGLVVSCQALEDEPLHSAFIMSKMALAAVQGGAVGIRANTAKDIRAIQSEIDVPIIGIYKKDYDDSDVFITPTLKEVREICETGVEIVAMDATTRKRPHNEDLKEILSAIRKEFPNTLFMADTGSIEDVYYADSLGFDLIGTTLYGYTEETANKNISDDDFSHLKEVLKSTKRPVIAEGKIDSPSKARQVLTLGCYAVVVGGAVTRPQEITTRFTNEIQKIQEERGK.

The protein belongs to the NanE family.

It catalyses the reaction an N-acyl-D-glucosamine 6-phosphate = an N-acyl-D-mannosamine 6-phosphate. Its pathway is amino-sugar metabolism; N-acetylneuraminate degradation; D-fructose 6-phosphate from N-acetylneuraminate: step 3/5. Functionally, converts N-acetylmannosamine-6-phosphate (ManNAc-6-P) to N-acetylglucosamine-6-phosphate (GlcNAc-6-P). This is Putative N-acetylmannosamine-6-phosphate 2-epimerase from Listeria monocytogenes serotype 4a (strain HCC23).